A 91-amino-acid polypeptide reads, in one-letter code: MKVSMFVVIVLCMVAASSAGRGARRYCGRVLADTLAYLCPEMEEVEKRSGAQYARYGWQSPESREGARGKRGVVDECCYNSCTLDVLLSYC.

The N-terminal stretch at 1–19 is a signal peptide; that stretch reads MKVSMFVVIVLCMVAASSA. Intrachain disulfides connect Cys-27–Cys-78, Cys-39–Cys-91, and Cys-77–Cys-82. Positions 49 to 69 are cleaved as a propeptide — c peptide like; the sequence is SGAQYARYGWQSPESREGARG.

This sequence belongs to the insulin family. As to quaternary structure, heterodimer of a B chain and an A chain linked by two disulfide bonds.

The protein resides in the secreted. Functionally, brain peptide responsible for activation of prothoracic glands to produce ecdysone in insects. This Samia cynthia (Ailanthus silkmoth) protein is Bombyxin B-1 homolog (SBXB1).